Here is a 124-residue protein sequence, read N- to C-terminus: Small ribosomal subunit protein uS12 (124 aa).

Residues 1–32 (MPTIQQLVRKGREDKVVKTKTPALKGSPQRRG) form a disordered region. Asp89 is subject to 3-methylthioaspartic acid. The tract at residues 105–124 (QGVKNRKQARSRYGAKKEKS) is disordered. A compositionally biased stretch (basic residues) spans 108 to 118 (KNRKQARSRYG).

The protein belongs to the universal ribosomal protein uS12 family. As to quaternary structure, part of the 30S ribosomal subunit. Contacts proteins S8 and S17. May interact with IF1 in the 30S initiation complex.

With S4 and S5 plays an important role in translational accuracy. In terms of biological role, interacts with and stabilizes bases of the 16S rRNA that are involved in tRNA selection in the A site and with the mRNA backbone. Located at the interface of the 30S and 50S subunits, it traverses the body of the 30S subunit contacting proteins on the other side and probably holding the rRNA structure together. The combined cluster of proteins S8, S12 and S17 appears to hold together the shoulder and platform of the 30S subunit. In Kineococcus radiotolerans (strain ATCC BAA-149 / DSM 14245 / SRS30216), this protein is Small ribosomal subunit protein uS12.